Consider the following 336-residue polypeptide: Nicotinate-nucleotide--dimethylbenzimidazole phosphoribosyltransferase (336 aa).

Positions 20–41 (GPDAAARAGAEERNGQLTKPPG) are disordered. Glutamate 304 functions as the Proton acceptor in the catalytic mechanism.

Belongs to the CobT family.

The catalysed reaction is 5,6-dimethylbenzimidazole + nicotinate beta-D-ribonucleotide = alpha-ribazole 5'-phosphate + nicotinate + H(+). It participates in nucleoside biosynthesis; alpha-ribazole biosynthesis; alpha-ribazole from 5,6-dimethylbenzimidazole: step 1/2. Functionally, catalyzes the synthesis of alpha-ribazole-5'-phosphate from nicotinate mononucleotide (NAMN) and 5,6-dimethylbenzimidazole (DMB). The chain is Nicotinate-nucleotide--dimethylbenzimidazole phosphoribosyltransferase from Ruegeria pomeroyi (strain ATCC 700808 / DSM 15171 / DSS-3) (Silicibacter pomeroyi).